We begin with the raw amino-acid sequence, 428 residues long: Isocitrate lyase 1 (428 aa).

A substrate-binding site is contributed by 91-93 (SGW). Residue Asp153 coordinates Mg(2+). Cys191 serves as the catalytic Proton acceptor. Residues 192-193 (GH), Arg228, 313-317 (NCSPS), and Thr347 each bind substrate.

This sequence belongs to the isocitrate lyase/PEP mutase superfamily. Isocitrate lyase family. Homotetramer. The cofactor is Mg(2+).

The catalysed reaction is D-threo-isocitrate = glyoxylate + succinate. The enzyme catalyses (2S,3R)-3-hydroxybutane-1,2,3-tricarboxylate = pyruvate + succinate. It functions in the pathway carbohydrate metabolism; glyoxylate cycle; (S)-malate from isocitrate: step 1/2. Functionally, involved in the persistence and virulence of M.tuberculosis. Catalyzes the reversible formation of succinate and glyoxylate from isocitrate, a key step of the glyoxylate cycle, which operates as an anaplerotic route for replenishing the tricarboxylic acid cycle during growth on fatty acid substrates. It also catalyzes the formation of pyruvate and succinate from 2-methylisocitrate, a key step in the methylcitrate cycle (propionate degradation route). This is Isocitrate lyase 1 (icl1) from Mycobacterium tuberculosis (strain ATCC 35801 / TMC 107 / Erdman).